We begin with the raw amino-acid sequence, 208 residues long: LexA repressor (208 aa).

A DNA-binding region (H-T-H motif) is located at residues 30–50 (VREIGKSVGLSSSSTVAAYLE). Residues S129 and K167 each act as for autocatalytic cleavage activity in the active site.

Belongs to the peptidase S24 family. Homodimer.

The enzyme catalyses Hydrolysis of Ala-|-Gly bond in repressor LexA.. Represses a number of genes involved in the response to DNA damage (SOS response), including recA and lexA. In the presence of single-stranded DNA, RecA interacts with LexA causing an autocatalytic cleavage which disrupts the DNA-binding part of LexA, leading to derepression of the SOS regulon and eventually DNA repair. The polypeptide is LexA repressor (Lacticaseibacillus casei (strain BL23) (Lactobacillus casei)).